Here is a 236-residue protein sequence, read N- to C-terminus: Small ribosomal subunit protein uS2c (236 aa).

Belongs to the universal ribosomal protein uS2 family.

It localises to the plastid. It is found in the chloroplast. The chain is Small ribosomal subunit protein uS2c (rps2) from Oenothera parviflora (Small-flowered evening primrose).